A 7524-amino-acid chain; its full sequence is Mucin-19 (7524 aa).

Positions 1–20 (MKLILLYLAVVLCFVGKGAA) are cleaved as a signal peptide. The tract at residues 20-47 (ARSPTTTRTPTPSTSEKASHVPEATPTY) is disordered. The span at 21-34 (RSPTTTRTPTPSTS) shows a compositional bias: low complexity. The VWFD 1 domain maps to 55 to 225 (GEATMWGKDK…VCEDGVQYCD (171 aa)). A disulfide bridge connects residues Cys-79 and Cys-224. The TIL domain maps to 298-353 (CPGKHIYKECGPSNPPTCSNVAPFQDSECVSGCTCPEGYLLDDIGEKGKCVLKEKC). VWFD domains follow at residues 392–568 (GICK…EGSP) and 851–1025 (STCH…QECS). Cystine bridges form between Cys-394–Cys-529, Cys-434–Cys-442, Cys-853–Cys-989, Cys-875–Cys-1024, Cys-884–Cys-986, and Cys-900–Cys-907. Residues 1244 to 1261 (AAATRASSSTSGSVETSV) are compositionally biased toward low complexity. Disordered regions lie at residues 1244–7217 (AAAT…SSLA) and 7249–7297 (SVIK…CPDS). Over residues 1262–1289 (PATTSTSKAQAHITTASSTETSALNSTA) the composition is skewed to polar residues. Low complexity-rich tracts occupy residues 1320–7099 (PAVS…AGSG) and 7112–7217 (STSG…SSLA). 36 consecutive repeat copies span residues 1321-1483 (AVST…TTGP), 1484-1646 (AVST…TTGP), 1647-1809 (AVST…TTGP), 1810-1972 (AVST…TTGP), 1973-2135 (AVST…TTGP), 2136-2298 (AVST…TTGP), 2299-2461 (AVST…TTGP), 2462-2624 (AVST…TTGP), 2625-2787 (AVST…TTGP), 2788-2950 (AVST…TTGP), 2951-3113 (AVST…TTGP), 3114-3276 (AVST…TTGP), 3277-3439 (AVST…TTGP), 3440-3602 (AVST…TTGP), 3603-3765 (AVST…TTGP), 3766-3928 (AVST…TTGP), 3929-4091 (AVST…TTGP), 4092-4254 (AVST…TTGP), 4255-4417 (AVST…TTGP), 4418-4580 (AVST…TTGP), 4581-4743 (AVST…TTGP), 4744-4906 (AVST…TTGP), 4907-5069 (AVST…TTGP), 5070-5232 (AVST…TTGP), 5233-5395 (AVST…TTGP), 5396-5558 (AVST…TTGP), 5559-5721 (AVST…TTGP), 5722-5884 (AVST…TTGP), 5885-6047 (AVST…TTGP), 6048-6210 (AVST…TTGP), 6211-6373 (AVST…TTGP), 6374-6536 (AVST…TTGP), 6537-6699 (AVST…TTGP), 6700-6862 (AVST…TTGP), 6863-7025 (AVST…TTGP), and 7026-7188 (AVST…TTGP). An approximate repeats region spans residues 1321–7188 (AVSTTSAGST…AETAGSTTGP (5868 aa)). Polar residues predominate over residues 7261-7291 (AKSNETTGRTTSMPASTSVAPGVTTSPNISQ). VWFC domains lie at 7302 to 7368 (PVCH…GHCE) and 7370 to 7432 (RTCL…YKCK). 4 cysteine pairs are disulfide-bonded: Cys-7435–Cys-7482, Cys-7449–Cys-7496, Cys-7458–Cys-7512, and Cys-7462–Cys-7514. The 85-residue stretch at 7435–7519 (CRTTPVNVTV…TTCSCRDQCE (85 aa)) folds into the CTCK domain.

In terms of tissue distribution, specifically expressed in sublingual salivary glands. Expressed by mucous cells of the submandibular gland and submucosal gland of the trachea. Expression is altered in sld (sublingual gland differentiation arrest) mutants.

It localises to the secreted. In terms of biological role, may function in ocular mucus homeostasis. The sequence is that of Mucin-19 (Muc19) from Mus musculus (Mouse).